The primary structure comprises 212 residues: Pyridoxine/pyridoxamine 5'-phosphate oxidase (212 aa).

Substrate-binding positions include 8–11 (RREY) and K66. FMN-binding positions include 61–66 (RIVLLK), 76–77 (FT), R82, K83, and Q105. 3 residues coordinate substrate: Y123, R127, and S131. FMN-binding positions include 140-141 (QS) and W185. Residue 191–193 (RLH) coordinates substrate. Residue R195 participates in FMN binding.

The protein belongs to the pyridoxamine 5'-phosphate oxidase family. As to quaternary structure, homodimer. FMN is required as a cofactor.

It catalyses the reaction pyridoxamine 5'-phosphate + O2 + H2O = pyridoxal 5'-phosphate + H2O2 + NH4(+). It carries out the reaction pyridoxine 5'-phosphate + O2 = pyridoxal 5'-phosphate + H2O2. The protein operates within cofactor metabolism; pyridoxal 5'-phosphate salvage; pyridoxal 5'-phosphate from pyridoxamine 5'-phosphate: step 1/1. It participates in cofactor metabolism; pyridoxal 5'-phosphate salvage; pyridoxal 5'-phosphate from pyridoxine 5'-phosphate: step 1/1. Its function is as follows. Catalyzes the oxidation of either pyridoxine 5'-phosphate (PNP) or pyridoxamine 5'-phosphate (PMP) into pyridoxal 5'-phosphate (PLP). The protein is Pyridoxine/pyridoxamine 5'-phosphate oxidase of Shewanella putrefaciens (strain CN-32 / ATCC BAA-453).